We begin with the raw amino-acid sequence, 345 residues long: Transcription factor MYB106 (345 aa).

2 HTH myb-type domains span residues 9-61 and 62-116; these read KAGL…TNYL and RPDI…KKRL. 2 consecutive DNA-binding regions (H-T-H motif) follow at residues 37–61 and 89–112; these read WRSLPEKAGLQRCGKSCRLRWTNYL and WSAIATHLPKRTDNEIKNYWNTHL.

As to expression, expressed in trichomes, stems, carpels, petals and stamens.

Its subcellular location is the nucleus. Its function is as follows. Functions as a repressor of epidermal cell outgrowth and negatively regulate trichome branch formation. Acts both as a positive and a negative regulator of cellular outgrowth. Promotes both trichome expansion and branch formation. Coordinately with WIN1/SHN1, participates in the regulation of cuticle biosynthesis and wax accumulation in reproductive organs and trichomes. Functions in cuticle nanoridge formation in petals and stamens, and in morphogenesis of petal conical cells and trichomes. May play a role in the regulation of cuticle formation in vegetative organs. In Arabidopsis thaliana (Mouse-ear cress), this protein is Transcription factor MYB106.